A 459-amino-acid chain; its full sequence is Argininosuccinate lyase (459 aa).

It belongs to the lyase 1 family. Argininosuccinate lyase subfamily.

It localises to the cytoplasm. The catalysed reaction is 2-(N(omega)-L-arginino)succinate = fumarate + L-arginine. The protein operates within amino-acid biosynthesis; L-arginine biosynthesis; L-arginine from L-ornithine and carbamoyl phosphate: step 3/3. The polypeptide is Argininosuccinate lyase (Oceanobacillus iheyensis (strain DSM 14371 / CIP 107618 / JCM 11309 / KCTC 3954 / HTE831)).